A 252-amino-acid chain; its full sequence is Ubiquinone biosynthesis O-methyltransferase (252 aa).

S-adenosyl-L-methionine contacts are provided by Arg-41, Gly-72, Asp-93, and Met-136.

The protein belongs to the methyltransferase superfamily. UbiG/COQ3 family.

It carries out the reaction a 3-demethylubiquinol + S-adenosyl-L-methionine = a ubiquinol + S-adenosyl-L-homocysteine + H(+). The catalysed reaction is a 3-(all-trans-polyprenyl)benzene-1,2-diol + S-adenosyl-L-methionine = a 2-methoxy-6-(all-trans-polyprenyl)phenol + S-adenosyl-L-homocysteine + H(+). It participates in cofactor biosynthesis; ubiquinone biosynthesis. Its function is as follows. O-methyltransferase that catalyzes the 2 O-methylation steps in the ubiquinone biosynthetic pathway. This Rhizobium leguminosarum bv. trifolii (strain WSM2304) protein is Ubiquinone biosynthesis O-methyltransferase.